Consider the following 48-residue polypeptide: Large ribosomal subunit protein bL32 (48 aa).

The disordered stretch occupies residues 1–20 (MAVPDRRVSKTRAAKRRTHY). The segment covering 9-20 (SKTRAAKRRTHY) has biased composition (basic residues).

Belongs to the bacterial ribosomal protein bL32 family.

The polypeptide is Large ribosomal subunit protein bL32 (Helicobacter acinonychis (strain Sheeba)).